A 414-amino-acid polypeptide reads, in one-letter code: Imidazolonepropionase (414 aa).

The span at 1–20 (MSHQLFRNTRIYSPMDSGQP) shows a compositional bias: polar residues. A disordered region spans residues 1-26 (MSHQLFRNTRIYSPMDSGQPSAGKAQ). Positions 81 and 83 each coordinate Fe(3+). 2 residues coordinate Zn(2+): His-81 and His-83. Arg-90, Tyr-153, and His-186 together coordinate 4-imidazolone-5-propanoate. Tyr-153 contacts N-formimidoyl-L-glutamate. His-251 provides a ligand contact to Fe(3+). Residue His-251 coordinates Zn(2+). Residue Glu-254 participates in 4-imidazolone-5-propanoate binding. Asp-325 lines the Fe(3+) pocket. Asp-325 contacts Zn(2+). N-formimidoyl-L-glutamate is bound by residues Asn-327 and Gly-329. 4-imidazolone-5-propanoate is bound at residue Ser-330.

It belongs to the metallo-dependent hydrolases superfamily. HutI family. The cofactor is Zn(2+). Requires Fe(3+) as cofactor.

It localises to the cytoplasm. It catalyses the reaction 4-imidazolone-5-propanoate + H2O = N-formimidoyl-L-glutamate. It functions in the pathway amino-acid degradation; L-histidine degradation into L-glutamate; N-formimidoyl-L-glutamate from L-histidine: step 3/3. Catalyzes the hydrolytic cleavage of the carbon-nitrogen bond in imidazolone-5-propanoate to yield N-formimidoyl-L-glutamate. It is the third step in the universal histidine degradation pathway. In Desulfotalea psychrophila (strain LSv54 / DSM 12343), this protein is Imidazolonepropionase.